The chain runs to 313 residues: Type I restriction enzyme EcoprrI endonuclease subunit (313 aa).

Belongs to the HsdR family. As to quaternary structure, the type I restriction/modification system is composed of three polypeptides R, M and S; the restriction enzyme has stoichiometry R(2)M(2)S(1) while the methyltransferase is M(2)S(1).

It catalyses the reaction Endonucleolytic cleavage of DNA to give random double-stranded fragments with terminal 5'-phosphates, ATP is simultaneously hydrolyzed.. The subtype C restriction (R) subunit of a type I restriction enzyme that recognizes 5'-CCAN(7)RTGC-3' and cleaves a random distance away. The R subunit is required for both endonuclease and ATPase activities but not for modification. Cleaves only non-methylated DNA, hemi-methylated and fully methylated DNA are not substrates. After locating a non-methylated recognition site, the enzyme complex serves as a molecular motor that translocates DNA in an ATP-dependent manner until a collision occurs that triggers cleavage. The prr locus restricts phage T4 mutants lacking polynucleotide kinase or RNA ligase; T4 mutants lacking these genes manifest a T4-induced anticodon nuclease (ACNase). This is a putative 'masking-agent' for the ACNase encoded by prrC. It is thought that Stp and other T4-encoded ACNase factors counteract the masking agents, thus activating the latent ACNase. The polypeptide is Type I restriction enzyme EcoprrI endonuclease subunit (Escherichia coli).